A 1125-amino-acid chain; its full sequence is Protein efr-3 (1125 aa).

Disordered stretches follow at residues 240–261, 471–493, 788–819, and 845–1093; these read RTSNATAQPSETTGGEPGPNPI, RPSRPTSPPNSSPNGERSDNGAA, TSPPTSPTTSPGRNFTHPMLGSTLSATPKDET, and QAGS…LGEK. A compositionally biased stretch (polar residues) spans 242–252; that stretch reads SNATAQPSETT. Low complexity predominate over residues 788-798; it reads TSPPTSPTTSP. Positions 845 to 854 are enriched in polar residues; sequence QAGSSQTASL. The span at 855-877 shows a compositional bias: low complexity; it reads NGTNGTHRNTVNNNNRLGVNGVT. 3 stretches are compositionally biased toward polar residues: residues 878–896, 975–1011, and 1046–1071; these read SPNGSNSNLRPSSSPTGPN, LSFNPAASGSRQGSPGNTSQAASSPPRRTSQDRTQQL, and SRTTSRTQPQATTAHTTLPRPSTSSK.

Belongs to the EFR3 family.

This is Protein efr-3 (efr-3) from Neurospora crassa (strain ATCC 24698 / 74-OR23-1A / CBS 708.71 / DSM 1257 / FGSC 987).